The chain runs to 560 residues: Formate--tetrahydrofolate ligase (560 aa).

69 to 76 contributes to the ATP binding site; that stretch reads TPAGEGKS.

Belongs to the formate--tetrahydrofolate ligase family.

It carries out the reaction (6S)-5,6,7,8-tetrahydrofolate + formate + ATP = (6R)-10-formyltetrahydrofolate + ADP + phosphate. It functions in the pathway one-carbon metabolism; tetrahydrofolate interconversion. The chain is Formate--tetrahydrofolate ligase from Listeria monocytogenes serovar 1/2a (strain ATCC BAA-679 / EGD-e).